A 195-amino-acid polypeptide reads, in one-letter code: Imidazoleglycerol-phosphate dehydratase (195 aa).

It belongs to the imidazoleglycerol-phosphate dehydratase family.

The protein localises to the cytoplasm. It catalyses the reaction D-erythro-1-(imidazol-4-yl)glycerol 3-phosphate = 3-(imidazol-4-yl)-2-oxopropyl phosphate + H2O. It functions in the pathway amino-acid biosynthesis; L-histidine biosynthesis; L-histidine from 5-phospho-alpha-D-ribose 1-diphosphate: step 6/9. The polypeptide is Imidazoleglycerol-phosphate dehydratase (Burkholderia vietnamiensis (strain G4 / LMG 22486) (Burkholderia cepacia (strain R1808))).